We begin with the raw amino-acid sequence, 525 residues long: Frizzled-4 (525 aa).

The first 24 residues, 1–24, serve as a signal peptide directing secretion; sequence MERRGGGGRMLALLLAGLLGGARG. Residues 25–200 are Extracellular-facing; that stretch reads FGDEEERRCD…KCGYDAGLYS (176 aa). The FZ domain maps to 28-149; the sequence is EEERRCDAIR…NDHNHMCMEG (122 aa). 8 disulfide bridges follow: Cys-33–Cys-94, Cys-41–Cys-87, Cys-78–Cys-116, Cys-105–Cys-146, Cys-109–Cys-133, Cys-169–Cys-188, Cys-192–Cys-270, and Cys-290–Cys-365. N-linked (GlcNAc...) asparagine glycosylation occurs at Asn-47. Asn-132 is a glycosylation site (N-linked (GlcNAc...) asparagine). A helical transmembrane segment spans residues 201 to 231; it reads RSAKEFTDIWMAVWASLCFISTAFTVLTFLI. At 232–237 the chain is on the cytoplasmic side; it reads DSSRFS. The helical transmembrane segment at 238-263 threads the bilayer; that stretch reads YPERPIIFLSMCYNIYSIAYIVRLTV. At 264–287 the chain is on the extracellular side; the sequence is GRERISCDFEEAAEPVLIQEGLKN. The helical transmembrane segment at 288 to 321 threads the bilayer; that stretch reads TGCAIIFLLMYFFGMASSIWWVILTLTWFLAAGL. Residues 322–324 lie on the Cytoplasmic side of the membrane; sequence KWG. Residues 325 to 353 traverse the membrane as a helical segment; that stretch reads HEAIEMHSSYFHIAAWAIPAVKTIVILIM. The Extracellular portion of the chain corresponds to 354–371; sequence RLVDADELTGLCYVGNQN. A helical membrane pass occupies residues 372 to 406; that stretch reads LDALTGFVVAPLFTYLVIGTLFIAAGLVALFKIRS. Topologically, residues 407–419 are cytoplasmic; the sequence is NLQKDGTKTDKLE. Residues 420 to 448 traverse the membrane as a helical segment; that stretch reads RLMVKIGVFSVLYTVPATCVIACYFYEIS. Residues 449-461 lie on the Extracellular side of the membrane; sequence NWAVFRYSADDSN. The chain crosses the membrane as a helical span at residues 462 to 483; sequence MAVEMLKIFMSLLVGITSGMWI. The Cytoplasmic segment spans residues 484-525; sequence WSAKTLHTWQKCSNRLVNSGKVKREKRADGWVKPGKGNETVV. The short motif at 487–492 is the Lys-Thr-X-X-X-Trp motif, mediates interaction with the PDZ domain of Dvl family members element; that stretch reads KTLHTW. The PDZ-binding signature appears at 523–525; it reads TVV.

Belongs to the G-protein coupled receptor Fz/Smo family. As to quaternary structure, interacts (via FZ domain) with TSKU; TSKU competes with WNT2B for binding to FZD4, inhibiting Wnt signaling and repressing peripheral eye development. As to expression, expressed in the developing kidney, interdigital spaces and optic cup.

Its subcellular location is the cell membrane. Receptor for Wnt proteins. Most frizzled receptors are coupled to the beta-catenin canonical signaling pathway, which leads to the activation of disheveled proteins, inhibition of GSK-3 kinase, nuclear accumulation of beta-catenin and activation of Wnt target genes. A second signaling pathway involving PKC and calcium fluxes has been seen for some family members, but it is not yet clear if it represents a distinct pathway or if it can be integrated in the canonical pathway, as PKC seems to be required for Wnt-mediated inactivation of GSK-3 kinase. Both pathways seem to involve interactions with G-proteins. May be involved in transduction and intercellular transmission of polarity information during tissue morphogenesis and/or in differentiated tissues. The protein is Frizzled-4 (FZD4) of Gallus gallus (Chicken).